Reading from the N-terminus, the 491-residue chain is Lysine--tRNA ligase (491 aa).

The Mg(2+) site is built by glutamate 400 and glutamate 407.

The protein belongs to the class-II aminoacyl-tRNA synthetase family. In terms of assembly, homodimer. Mg(2+) is required as a cofactor.

It localises to the cytoplasm. It catalyses the reaction tRNA(Lys) + L-lysine + ATP = L-lysyl-tRNA(Lys) + AMP + diphosphate. In Mesomycoplasma hyopneumoniae (strain J / ATCC 25934 / NCTC 10110) (Mycoplasma hyopneumoniae), this protein is Lysine--tRNA ligase.